A 305-amino-acid chain; its full sequence is Acetyl-coenzyme A carboxylase carboxyl transferase subunit beta (305 aa).

Residues 23–292 (GWLKCTHCNE…EENEPSPPPK (270 aa)) form the CoA carboxyltransferase N-terminal domain. C27, C30, C46, and C49 together coordinate Zn(2+). The C4-type zinc-finger motif lies at 27–49 (CTHCNELIHANELEQNSNCCPKC). The segment at 281-305 (FSEENEPSPPPKNLIKKTSPLKDKN) is disordered.

It belongs to the AccD/PCCB family. In terms of assembly, acetyl-CoA carboxylase is a heterohexamer composed of biotin carboxyl carrier protein (AccB), biotin carboxylase (AccC) and two subunits each of ACCase subunit alpha (AccA) and ACCase subunit beta (AccD). The cofactor is Zn(2+).

It is found in the cytoplasm. It catalyses the reaction N(6)-carboxybiotinyl-L-lysyl-[protein] + acetyl-CoA = N(6)-biotinyl-L-lysyl-[protein] + malonyl-CoA. Its pathway is lipid metabolism; malonyl-CoA biosynthesis; malonyl-CoA from acetyl-CoA: step 1/1. Functionally, component of the acetyl coenzyme A carboxylase (ACC) complex. Biotin carboxylase (BC) catalyzes the carboxylation of biotin on its carrier protein (BCCP) and then the CO(2) group is transferred by the transcarboxylase to acetyl-CoA to form malonyl-CoA. In Protochlamydia amoebophila (strain UWE25), this protein is Acetyl-coenzyme A carboxylase carboxyl transferase subunit beta.